The following is a 179-amino-acid chain: Warthog protein 3 (179 aa).

Residues 1-19 (MLYHVEMFTIILLFGFSLA) form the signal peptide. Asn52 and Asn147 each carry an N-linked (GlcNAc...) asparagine glycan.

Expressed in the trinucleate pharyngeal gland cell g1, seam cells and hypodermis.

The protein localises to the secreted. In terms of biological role, intercellular signal essential for a variety of patterning events during development. In Caenorhabditis elegans, this protein is Warthog protein 3 (wrt-3).